Consider the following 676-residue polypeptide: RNA helicase NPH-II (676 aa).

A Helicase ATP-binding domain is found at 172–347 (FSAWISHRPV…VFLPNPAFIH (176 aa)). Residue 185–192 (GGTGVGKT) coordinates ATP. The DEXH box motif lies at 296–299 (DEVH). Positions 366–535 (NPSSRMAYIE…NYILYANKFN (170 aa)) constitute a Helicase C-terminal domain.

The protein belongs to the DEAD box helicase family. DEAH subfamily. Monomer.

It localises to the virion. The catalysed reaction is ATP + H2O = ADP + phosphate + H(+). In terms of biological role, NTP-dependent helicase that catalyzes unidirectional unwinding of 3'tailed duplex RNAs and plays an important role during transcription of early mRNAs, presumably by preventing R-loop formation behind the elongating RNA polymerase. Might also play a role in the export of newly synthesized mRNA chains out of the core into the cytoplasm. Required for replication and propagation of viral particles. The protein is RNA helicase NPH-II (OPG084) of Vaccinia virus (strain Ankara) (VACV).